We begin with the raw amino-acid sequence, 90 residues long: Small ribosomal subunit protein bS16 (90 aa).

This sequence belongs to the bacterial ribosomal protein bS16 family.

The sequence is that of Small ribosomal subunit protein bS16 from Clostridioides difficile (strain 630) (Peptoclostridium difficile).